The following is a 34-amino-acid chain: Photosystem II reaction center protein M (34 aa).

Residues 7-27 form a helical membrane-spanning segment; it reads GFVASLLFILVPAIFLIVLYI.

Belongs to the PsbM family. As to quaternary structure, PSII is composed of 1 copy each of membrane proteins PsbA, PsbB, PsbC, PsbD, PsbE, PsbF, PsbH, PsbI, PsbJ, PsbK, PsbL, PsbM, PsbT, PsbX, PsbY, PsbZ, Psb30/Ycf12, peripheral proteins PsbO, CyanoQ (PsbQ), PsbU, PsbV and a large number of cofactors. It forms dimeric complexes.

It is found in the cellular thylakoid membrane. Functionally, one of the components of the core complex of photosystem II (PSII). PSII is a light-driven water:plastoquinone oxidoreductase that uses light energy to abstract electrons from H(2)O, generating O(2) and a proton gradient subsequently used for ATP formation. It consists of a core antenna complex that captures photons, and an electron transfer chain that converts photonic excitation into a charge separation. This subunit is found at the monomer-monomer interface. The sequence is that of Photosystem II reaction center protein M from Parasynechococcus marenigrum (strain WH8102).